We begin with the raw amino-acid sequence, 659 residues long: Polyamine transporter 4 (659 aa).

Polar residues-rich tracts occupy residues 1 to 20 (MPSS…NIQQ) and 28 to 45 (NVTN…TGSI). The tract at residues 1–81 (MPSSLTKTES…LDWDGPDDPD (81 aa)) is disordered. Residues 1-99 (MPSSLTKTES…KKWYTTMTSA (99 aa)) are Cytoplasmic-facing. Residues 100–120 (FLCLVVTMGSSLYVSSVPELV) form a helical membrane-spanning segment. The Extracellular segment spans residues 121–128 (ERYHVSQT). The chain crosses the membrane as a helical span at residues 129-149 (LALAGLTFYLLGLSTVIGAPL). The Cytoplasmic segment spans residues 150–157 (SEVFGRKP). The helical transmembrane segment at 158 to 178 (VYLFSLPVSMLFTMGVGLSNG) threads the bilayer. The Extracellular segment spans residues 179-187 (HMRIILPLR). Residues 188 to 208 (FLSGVFASPALSVGSGTILDI) traverse the membrane as a helical segment. At 209 to 215 (FDVDQVS) the chain is on the cytoplasmic side. Residues 216–236 (VAMTYFVLSPFLGPVLSPIMA) traverse the membrane as a helical segment. Topologically, residues 237 to 246 (GFATEAKGWR) are extracellular. A helical membrane pass occupies residues 247-267 (WSEWIQLIAGGLILPFIALMP). At 268–316 (ETHKGIILRKRAKKRNIALKKFSREAQKEFLKTTVTITILRPLKMLVVE) the chain is on the cytoplasmic side. A helical transmembrane segment spans residues 317–337 (PIVFVFSVYVAFIFAILFGFF). The Extracellular segment spans residues 338–355 (EAYAVIYRGVYHMSMGIS). A helical transmembrane segment spans residues 356 to 376 (GLPFIGIGVGLWIGAFFYLYI). At 377–423 (DRKYLFPKPPAGTQPLTEKERTSKRTTPYRGARDAETGELLPVVPEK) the chain is on the cytoplasmic side. Residues 387–408 (AGTQPLTEKERTSKRTTPYRGA) are disordered. The chain crosses the membrane as a helical span at residues 424-444 (FLIACKFGSVALPIGLFWQAW). Residues 445 to 456 (TARSDVHWMAPV) lie on the Extracellular side of the membrane. The chain crosses the membrane as a helical span at residues 457–477 (AAGVPFGFGLILIFFSVLMYF). The Cytoplasmic portion of the chain corresponds to 478 to 486 (STCYPPLTV). The chain crosses the membrane as a helical span at residues 487–509 (ASCLAANNLLRYVMSSVFPLFTI). Over 510–518 (QMYTKMKIK) the chain is Extracellular. A helical transmembrane segment spans residues 519-539 (WASTLFALVCVVMIPIPWVFE). Residues 540–659 (KWGSKLRHKS…MATDASARMV (120 aa)) are Cytoplasmic-facing. Positions 587–602 (METDPSTREKPGERLS) are enriched in basic and acidic residues. The interval 587–631 (METDPSTREKPGERLSLRRTHTQPVPASFDREDGQHAQNRNEPIS) is disordered. 3 positions are modified to phosphothreonine: threonine 589, threonine 606, and threonine 608. The span at 622–631 (HAQNRNEPIS) shows a compositional bias: polar residues. 2 positions are modified to phosphoserine: serine 633 and serine 646.

The protein belongs to the major facilitator superfamily. DHA1 family. Polyamines/proton antiporter (TC 2.A.1.2.16) subfamily.

The protein localises to the cell membrane. Its function is as follows. Cell membrane polyamine/proton antiporter, involved in the detoxification of excess polyamines in the cytoplasm. Recognizes spermidine, spermine and the antimalarial drug quinidine, but not quinine, chloroquine and mefloquine. The protein is Polyamine transporter 4 (TPO4) of Saccharomyces cerevisiae (strain ATCC 204508 / S288c) (Baker's yeast).